A 143-amino-acid polypeptide reads, in one-letter code: Large ribosomal subunit protein uL11 (143 aa).

It belongs to the universal ribosomal protein uL11 family. Part of the ribosomal stalk of the 50S ribosomal subunit. Interacts with L10 and the large rRNA to form the base of the stalk. L10 forms an elongated spine to which L12 dimers bind in a sequential fashion forming a multimeric L10(L12)X complex. Post-translationally, one or more lysine residues are methylated.

Functionally, forms part of the ribosomal stalk which helps the ribosome interact with GTP-bound translation factors. The sequence is that of Large ribosomal subunit protein uL11 from Alkalilimnicola ehrlichii (strain ATCC BAA-1101 / DSM 17681 / MLHE-1).